The following is a 237-amino-acid chain: 7-cyano-7-deazaguanine synthase (237 aa).

9-19 (YSGGLDSTTCL) provides a ligand contact to ATP. Zn(2+)-binding residues include C189, C199, C202, and C205.

Belongs to the QueC family. The cofactor is Zn(2+).

The enzyme catalyses 7-carboxy-7-deazaguanine + NH4(+) + ATP = 7-cyano-7-deazaguanine + ADP + phosphate + H2O + H(+). It functions in the pathway purine metabolism; 7-cyano-7-deazaguanine biosynthesis. Functionally, catalyzes the ATP-dependent conversion of 7-carboxy-7-deazaguanine (CDG) to 7-cyano-7-deazaguanine (preQ(0)). The sequence is that of 7-cyano-7-deazaguanine synthase from Geobacter metallireducens (strain ATCC 53774 / DSM 7210 / GS-15).